We begin with the raw amino-acid sequence, 216 residues long: Orotidine 5'-phosphate decarboxylase (216 aa).

Substrate is bound by residues Asp12, Lys34, 62-71, Ser119, 172-182, Gly194, and Arg195; these read DFKVADIDAT and PGVGFQGGNAK. The Proton donor role is filled by Lys64.

Belongs to the OMP decarboxylase family. Type 1 subfamily. In terms of assembly, homodimer.

The catalysed reaction is orotidine 5'-phosphate + H(+) = UMP + CO2. Its pathway is pyrimidine metabolism; UMP biosynthesis via de novo pathway; UMP from orotate: step 2/2. Catalyzes the decarboxylation of orotidine 5'-monophosphate (OMP) to uridine 5'-monophosphate (UMP). This is Orotidine 5'-phosphate decarboxylase from Methanosphaera stadtmanae (strain ATCC 43021 / DSM 3091 / JCM 11832 / MCB-3).